A 179-amino-acid chain; its full sequence is MNRLKEKFQKEITPALVSKFNYKSVMQVPKIEKIVINTGVGDAVSNSKALDNAVEELTQITGQKPVVTRAKKSIAGFRLREGMPIGAKVTLRGEQMYEFFDKLVSVSLPRVRDFRGVSKKSFDGRGNYTLGVKEQLIFPEIDYDKVSKVRGMDIVIVTTAKTDEEARELLTQFGMPFQK.

It belongs to the universal ribosomal protein uL5 family. In terms of assembly, part of the 50S ribosomal subunit; part of the 5S rRNA/L5/L18/L25 subcomplex. Contacts the 5S rRNA and the P site tRNA. Forms a bridge to the 30S subunit in the 70S ribosome.

This is one of the proteins that bind and probably mediate the attachment of the 5S RNA into the large ribosomal subunit, where it forms part of the central protuberance. In the 70S ribosome it contacts protein S13 of the 30S subunit (bridge B1b), connecting the 2 subunits; this bridge is implicated in subunit movement. Contacts the P site tRNA; the 5S rRNA and some of its associated proteins might help stabilize positioning of ribosome-bound tRNAs. The protein is Large ribosomal subunit protein uL5 of Bacillus cereus (strain 03BB102).